The following is a 385-amino-acid chain: U6 small nuclear RNA (adenine-(43)-N(6))-methyltransferase (385 aa).

Residues R54, G83, E106, and N155 each contribute to the S-adenosyl-L-methionine site.

It belongs to the methyltransferase superfamily. METTL16/RlmF family.

The protein localises to the cytoplasm. It localises to the nucleus. The catalysed reaction is adenosine in U6 snRNA + S-adenosyl-L-methionine = N(6)-methyladenosine in U6 snRNA + S-adenosyl-L-homocysteine + H(+). Its function is as follows. RNA N6-methyltransferase that mediates N6-methylation of adenine of U6 small nuclear RNA (U6 snRNA). This is U6 small nuclear RNA (adenine-(43)-N(6))-methyltransferase from Schizosaccharomyces pombe (strain 972 / ATCC 24843) (Fission yeast).